A 280-amino-acid polypeptide reads, in one-letter code: Ribonuclease Z (280 aa).

Zn(2+) contacts are provided by H61, H63, D65, H66, H153, D176, and H240. The active-site Proton acceptor is D65.

This sequence belongs to the RNase Z family. Homodimer. Zn(2+) serves as cofactor.

The enzyme catalyses Endonucleolytic cleavage of RNA, removing extra 3' nucleotides from tRNA precursor, generating 3' termini of tRNAs. A 3'-hydroxy group is left at the tRNA terminus and a 5'-phosphoryl group is left at the trailer molecule.. In terms of biological role, zinc phosphodiesterase, which displays some tRNA 3'-processing endonuclease activity. Probably involved in tRNA maturation, by removing a 3'-trailer from precursor tRNA. This Mycobacterium bovis (strain BCG / Pasteur 1173P2) protein is Ribonuclease Z.